We begin with the raw amino-acid sequence, 160 residues long: Urease accessory protein UreE (160 aa).

It belongs to the UreE family.

The protein resides in the cytoplasm. Its function is as follows. Involved in urease metallocenter assembly. Binds nickel. Probably functions as a nickel donor during metallocenter assembly. The sequence is that of Urease accessory protein UreE from Acinetobacter baumannii (strain AB307-0294).